Here is a 191-residue protein sequence, read N- to C-terminus: HTH-type transcriptional regulator YjdC (191 aa).

The HTH tetR-type domain occupies 1-60 (MQREDVLGEALKLLELQGIANTTLEMVAERVDYPLDELRRFWPDKEAILYDALRYLSQQI).

The polypeptide is HTH-type transcriptional regulator YjdC (yjdC) (Escherichia coli (strain K12)).